The primary structure comprises 288 residues: Phenazine biosynthesis-like domain-containing protein (288 aa).

The active site involves Glu-46.

The protein belongs to the PhzF family. In terms of assembly, interacts with UNRIP/MAWD.

The polypeptide is Phenazine biosynthesis-like domain-containing protein (Pbld) (Rattus norvegicus (Rat)).